The primary structure comprises 302 residues: Oxygen-dependent coproporphyrinogen-III oxidase (302 aa).

Residue Ser94 coordinates substrate. A divalent metal cation is bound by residues His98 and His108. His108 functions as the Proton donor in the catalytic mechanism. A substrate-binding site is contributed by Asn110–Arg112. A divalent metal cation-binding residues include His147 and His177. Residues Tyr242 to Glu277 form an important for dimerization region. Substrate is bound at residue Gly260–Arg262.

This sequence belongs to the aerobic coproporphyrinogen-III oxidase family. As to quaternary structure, homodimer. A divalent metal cation is required as a cofactor.

The protein resides in the cytoplasm. The enzyme catalyses coproporphyrinogen III + O2 + 2 H(+) = protoporphyrinogen IX + 2 CO2 + 2 H2O. It participates in porphyrin-containing compound metabolism; protoporphyrin-IX biosynthesis; protoporphyrinogen-IX from coproporphyrinogen-III (O2 route): step 1/1. In terms of biological role, involved in the heme biosynthesis. Catalyzes the aerobic oxidative decarboxylation of propionate groups of rings A and B of coproporphyrinogen-III to yield the vinyl groups in protoporphyrinogen-IX. The sequence is that of Oxygen-dependent coproporphyrinogen-III oxidase from Aeromonas hydrophila subsp. hydrophila (strain ATCC 7966 / DSM 30187 / BCRC 13018 / CCUG 14551 / JCM 1027 / KCTC 2358 / NCIMB 9240 / NCTC 8049).